The following is a 555-amino-acid chain: CCR4-NOT transcription complex subunit 6-like (555 aa).

The interval M1–R152 is required for interaction with CNOT1, CNOT3 and CNOT7. LRR repeat units lie at residues H57–L78, N80–M101, S103–F125, and Q126–P148. Residues M158–R555 are nuclease domain. E240 is a binding site for Mg(2+). Substrate is bound by residues E240, E276, H360, and P365. Position 410 (D410) interacts with Mg(2+). The active-site Proton donor/acceptor is D410. Substrate-binding residues include N412, N479, and F484.

Belongs to the CCR4/nocturin family. Component of the CCR4-NOT complex; distinct complexes seem to exist that differ in the participation of probably mutually exclusive catalytic subunits; the complex contains two deadenylase subunits, CNOT6 or CNOT6L, and CNOT7 or CNOT8. Interacts with CNOT1, CNOT3, CNOT7, CNOT8 and CNOT9. Interacts with TOB1. Interacts with NANOS2. Interacts with ZFP36. Interacts with ZFP36L2. Interacts with RBM46. Mg(2+) serves as cofactor.

The protein resides in the cytoplasm. Its subcellular location is the nucleus. It carries out the reaction Exonucleolytic cleavage of poly(A) to 5'-AMP.. Poly(A) nuclease with 3'-5' RNase activity. Catalytic component of the CCR4-NOT complex which is one of the major cellular mRNA deadenylases and is linked to various cellular processes including bulk mRNA degradation, miRNA-mediated repression, translational repression during translational initiation and general transcription regulation. Additional complex functions may be a consequence of its influence on mRNA expression. Involved in mRNA decay mediated by the major-protein-coding determinant of instability (mCRD) of the FOS gene in the cytoplasm. Involved in deadenylation-dependent degradation of CDKN1B mRNA. Its mRNA deadenylase activity can be inhibited by TOB1. Mediates cell proliferation and cell survival and prevents cellular senescence. This Mus musculus (Mouse) protein is CCR4-NOT transcription complex subunit 6-like (Cnot6l).